Reading from the N-terminus, the 426-residue chain is Zinc finger protein 662 (426 aa).

The KRAB domain maps to 1-44; that stretch reads MLENYGAVASLAAFPFPKPALISQLERGETPWCSVPRGALDGEA. 8 consecutive C2H2-type zinc fingers follow at residues 192–214, 220–242, 248–270, 276–298, 304–326, 332–354, 360–382, and 388–410; these read YICE…QKTH, YGCK…QRIH, YECQ…QRIH, FECK…QRIH, YTCK…QRMH, YECK…QRVH, HECT…QRIH, and YKCN…QRRH.

This sequence belongs to the krueppel C2H2-type zinc-finger protein family.

The protein resides in the nucleus. Its function is as follows. May be involved in transcriptional regulation. The chain is Zinc finger protein 662 (ZNF662) from Homo sapiens (Human).